A 692-amino-acid chain; its full sequence is Elongation factor G (692 aa).

The 275-residue stretch at 8–282 folds into the tr-type G domain; sequence KDTRNIGIMA…AVLDYLPSPL (275 aa). Residues 17–24, 81–85, and 135–138 contribute to the GTP site; these read AHIDAGKT, DTPGH, and NKMD.

It belongs to the TRAFAC class translation factor GTPase superfamily. Classic translation factor GTPase family. EF-G/EF-2 subfamily.

It localises to the cytoplasm. In terms of biological role, catalyzes the GTP-dependent ribosomal translocation step during translation elongation. During this step, the ribosome changes from the pre-translocational (PRE) to the post-translocational (POST) state as the newly formed A-site-bound peptidyl-tRNA and P-site-bound deacylated tRNA move to the P and E sites, respectively. Catalyzes the coordinated movement of the two tRNA molecules, the mRNA and conformational changes in the ribosome. The protein is Elongation factor G of Shouchella clausii (strain KSM-K16) (Alkalihalobacillus clausii).